A 350-amino-acid chain; its full sequence is Arabinogalactan endo-beta-1,4-galactanase A (350 aa).

Positions 1-16 are cleaved as a signal peptide; the sequence is MIYPLLLSALPLLSSA. N-linked (GlcNAc...) asparagine glycosylation is present at asparagine 128. Residue glutamate 152 is the Proton donor of the active site. The active-site Nucleophile is glutamate 262.

The protein belongs to the glycosyl hydrolase 53 family.

Its subcellular location is the secreted. It carries out the reaction The enzyme specifically hydrolyzes (1-&gt;4)-beta-D-galactosidic linkages in type I arabinogalactans.. In terms of biological role, endogalactanase involved in the degradation of plant cell wall polysaccharides, and more particularly of hairy regions of pectin. The polypeptide is Arabinogalactan endo-beta-1,4-galactanase A (galA) (Aspergillus niger).